Reading from the N-terminus, the 89-residue chain is UPF0223 protein BCA_4066 (89 aa).

This sequence belongs to the UPF0223 family.

The protein is UPF0223 protein BCA_4066 of Bacillus cereus (strain 03BB102).